Here is a 680-residue protein sequence, read N- to C-terminus: Leucine-rich repeat and calponin homology domain-containing protein 4 (680 aa).

Over residues 1–22 the composition is skewed to low complexity; it reads MAAAVAGPLAAGGEEAAASVSL. The interval 1-35 is disordered; that stretch reads MAAAVAGPLAAGGEEAAASVSLPGSPGLPGSRSAE. 9 LRR repeats span residues 41–64, 67–90, 92–113, 114–136, 138–158, 159–181, 182–204, 206–226, and 227–250; these read AVATGTLNLSNRRLKHFPRGAARS, LSDITQADLSRNRFPEVPEAACQL, SLEGLSLYHNCLKCLNPALGNL, TALTYLNLSRNQLSSLPPYICQL, LRVLIISNNKLGALPPDISTL, GSLRQLDVSSNELQSLPVELCSL, RSLRDLNVRRNQLSTLPDELGDL, LVRLDFSCNRISRIPVSFCRL, and RHLQVVLLDSNPLQSPPAQICLKG. Ser-279, Ser-281, Ser-304, Ser-307, Ser-309, and Ser-313 each carry phosphoserine. Residues 329-528 form a disordered region; sequence SELARDPRGP…PSSPESVLRP (200 aa). Residues 330 to 345 are compositionally biased toward basic and acidic residues; that stretch reads ELARDPRGPRQPREDG. Residues 346 to 355 show a composition bias toward acidic residues; it reads AGDGDLEQID. Basic and acidic residues-rich tracts occupy residues 357-371 and 385-418; these read IDSHVPGEDEDRSAA and DVEKPSSSRREEPAGEERRRPDTLQLWQERERKQ. Ser-432 carries the phosphoserine modification. Low complexity-rich tracts occupy residues 440 to 453 and 510 to 528; these read AAGAGASAPSTQAT and RSSSQSGSSPSSPESVLRP. 5 positions are modified to phosphoserine: Ser-511, Ser-513, Ser-517, Ser-521, and Ser-586. A Calponin-homology (CH) domain is found at 531–644; sequence FPQEKELISQ…VLEAVILVGG (114 aa). The chain crosses the membrane as a helical span at residues 655-675; the sequence is GLGGFLLFYVVFMLLLYVVYT.

As to expression, widely expressed across tissues, with the most abundant expression in spleen, testes, thymus, intestine, and blood. Expressed in macrophages.

It localises to the cell membrane. Functionally, accessory protein that regulates signaling by multiple TLRs, acting as a broad-spanning regulator of the innate immune response. In macrophages, binds LPS and promotes proper docking of LPS in lipid raft membrane. May be required for lipid raft maintenance. The chain is Leucine-rich repeat and calponin homology domain-containing protein 4 (Lrch4) from Mus musculus (Mouse).